Here is a 499-residue protein sequence, read N- to C-terminus: Bifunctional purine biosynthesis protein PurH (499 aa).

The region spanning 1–144 (MIKRALISVF…KNFQDVVVLT (144 aa)) is the MGS-like domain.

This sequence belongs to the PurH family.

The enzyme catalyses (6R)-10-formyltetrahydrofolate + 5-amino-1-(5-phospho-beta-D-ribosyl)imidazole-4-carboxamide = 5-formamido-1-(5-phospho-D-ribosyl)imidazole-4-carboxamide + (6S)-5,6,7,8-tetrahydrofolate. It carries out the reaction IMP + H2O = 5-formamido-1-(5-phospho-D-ribosyl)imidazole-4-carboxamide. It functions in the pathway purine metabolism; IMP biosynthesis via de novo pathway; 5-formamido-1-(5-phospho-D-ribosyl)imidazole-4-carboxamide from 5-amino-1-(5-phospho-D-ribosyl)imidazole-4-carboxamide (10-formyl THF route): step 1/1. It participates in purine metabolism; IMP biosynthesis via de novo pathway; IMP from 5-formamido-1-(5-phospho-D-ribosyl)imidazole-4-carboxamide: step 1/1. In Clostridium acetobutylicum (strain ATCC 824 / DSM 792 / JCM 1419 / IAM 19013 / LMG 5710 / NBRC 13948 / NRRL B-527 / VKM B-1787 / 2291 / W), this protein is Bifunctional purine biosynthesis protein PurH.